The sequence spans 301 residues: MKIGILSRNKKLYSTRRLIEAAEARGHEVKVVDALRCYMNINSELPEIHYRGENLKGFDAVIPRIGASVTFYGCSVLRQFEMMGVYPVNESVAISRSRDKLRSLQLLSRKGVGMPVTGFASKPDDVKDLLEMVGGAPVVIKLLEGTQGIGVVLAETRKAAESVIEAFMGLKANIMVQEYIKEAGGADIRCFVLGDKVIAAMKRQAQEGEFRSNLHRGGSATLVRITPEERKTAVAAAKAMGLNVAGVDLLRSSRGPLVMEVNSSPGLEGIEIATGKDIAGMVIDFIEKTASSKGTATRGKG.

The ATP-grasp domain maps to 104-287 (LQLLSRKGVG…IAGMVIDFIE (184 aa)). Residues Lys-141, 178 to 179 (EY), Asp-187, and 211 to 213 (RSN) contribute to the ATP site. Asp-248, Glu-260, and Asn-262 together coordinate Mg(2+). Asp-248, Glu-260, and Asn-262 together coordinate Mn(2+).

This sequence belongs to the RimK family. It depends on Mg(2+) as a cofactor. Requires Mn(2+) as cofactor.

This is Probable alpha-L-glutamate ligase from Pseudoalteromonas translucida (strain TAC 125).